Here is an 838-residue protein sequence, read N- to C-terminus: Leucine--tRNA ligase (838 aa).

Residues 38–48 (PYPSGKAHVGH) carry the 'HIGH' region motif. Positions 608–612 (KMSKS) match the 'KMSKS' region motif. Residue lysine 611 coordinates ATP.

Belongs to the class-I aminoacyl-tRNA synthetase family.

It is found in the cytoplasm. The enzyme catalyses tRNA(Leu) + L-leucine + ATP = L-leucyl-tRNA(Leu) + AMP + diphosphate. This chain is Leucine--tRNA ligase, found in Orientia tsutsugamushi (strain Boryong) (Rickettsia tsutsugamushi).